Reading from the N-terminus, the 294-residue chain is Lycopene elongase/hydratase (294 aa).

8 consecutive transmembrane segments (helical) span residues 31-51 (FWLYLGGPVIVGVSYAADGPG), 53-73 (LFSPLAIALFLYFTIPGNVFL), 115-135 (LALLFALVLPTLGIVALLAWM), 160-180 (GLYILPGVIGYAAIEGVAPPA), 182-202 (AVVGAWLWAMGMHTFSAIPDI), 222-242 (TYYYCVMCWLMAAFVFNFTHW), 243-263 (VFGVLLLVYPGLVFGILGVGV), and 274-294 (AINTVVGMVFTLIALWVMLYG).

Belongs to the UbiA prenyltransferase family.

The protein resides in the cell membrane. The enzyme catalyses all-trans-lycopene + dimethylallyl diphosphate + H2O = dihydroisopentenyldehydrorhodopin + diphosphate. The catalysed reaction is isopentenyldehydrorhodopin + dimethylallyl diphosphate + H2O = dihydrobisanhydrobacterioruberin + diphosphate. It participates in carotenoid biosynthesis. Its function is as follows. Involved in the biosynthesis of the acyclic C50 carotenoid bacterioruberin (BR). Acts as a bifunctional elongase/hydratase that catalyzes the elongation of lycopene by attaching a C(5) isoprene unit at C-2, as well as the hydroxylation of the previous end of the molecule. The enzyme acts at both ends of the substrate, and catalyzes the conversion of lycopene to the C(45) intermediate dihydroisopentenyldehydrorhodopin (DH-IDR) and the conversion of isopentenyldehydrorhodopin (IDR) to the C(50) carotenoid dihydrobisanhydrobacterioruberin (DH-BABR). Can also catalyze the conversion of lycopene to tetrahydrobisanhydrobacterioruberin (TH-BABR). The polypeptide is Lycopene elongase/hydratase (Haloarcula japonica (strain ATCC 49778 / DSM 6131 / JCM 7785 / NBRC 101032 / NCIMB 13157 / TR-1)).